Here is a 235-residue protein sequence, read N- to C-terminus: Cobalt transport protein CbiM (235 aa).

The signal sequence occupies residues 1–33; the sequence is MRYLKFFLLLVFLVPSFGFSMHIMEGFLPPTHA. Transmembrane regions (helical) follow at residues 34 to 51, 63 to 83, 95 to 115, 118 to 138, 156 to 176, and 199 to 219; these read LIWYILSLPFFVIGLFTI, MLLAFVGAFTFVLSAMKIPSV, LGAIIFGPFTMTVIGTIVLLF, LLLAHGGLTTLGANTFSMAIV, NIAVFLAAFLGDLFTYVTTSF, and IFAITQVPLAIIEGLVTVVVI.

Belongs to the CbiM family. In terms of assembly, forms an energy-coupling factor (ECF) transporter complex composed of an ATP-binding protein (A component, CbiO), a transmembrane protein (T component, CbiQ) and 2 possible substrate-capture proteins (S components, CbiM and CbiN) of unknown stoichimetry.

It is found in the cell inner membrane. It participates in cofactor biosynthesis; adenosylcobalamin biosynthesis. Its function is as follows. Part of the energy-coupling factor (ECF) transporter complex CbiMNOQ involved in cobalt import. The sequence is that of Cobalt transport protein CbiM from Thermosipho melanesiensis (strain DSM 12029 / CIP 104789 / BI429).